The following is a 90-amino-acid chain: uncharacterized protein (90 aa).

This is an uncharacterized protein from Haemophilus influenzae (strain ATCC 51907 / DSM 11121 / KW20 / Rd).